A 178-amino-acid polypeptide reads, in one-letter code: Crossover junction endodeoxyribonuclease RuvC (178 aa).

Catalysis depends on residues D8, E72, and D144. Residues D8, E72, and D144 each contribute to the Mg(2+) site.

It belongs to the RuvC family. Homodimer which binds Holliday junction (HJ) DNA. The HJ becomes 2-fold symmetrical on binding to RuvC with unstacked arms; it has a different conformation from HJ DNA in complex with RuvA. In the full resolvosome a probable DNA-RuvA(4)-RuvB(12)-RuvC(2) complex forms which resolves the HJ. Mg(2+) is required as a cofactor.

Its subcellular location is the cytoplasm. The catalysed reaction is Endonucleolytic cleavage at a junction such as a reciprocal single-stranded crossover between two homologous DNA duplexes (Holliday junction).. The RuvA-RuvB-RuvC complex processes Holliday junction (HJ) DNA during genetic recombination and DNA repair. Endonuclease that resolves HJ intermediates. Cleaves cruciform DNA by making single-stranded nicks across the HJ at symmetrical positions within the homologous arms, yielding a 5'-phosphate and a 3'-hydroxyl group; requires a central core of homology in the junction. The consensus cleavage sequence is 5'-(A/T)TT(C/G)-3'. Cleavage occurs on the 3'-side of the TT dinucleotide at the point of strand exchange. HJ branch migration catalyzed by RuvA-RuvB allows RuvC to scan DNA until it finds its consensus sequence, where it cleaves and resolves the cruciform DNA. This Idiomarina loihiensis (strain ATCC BAA-735 / DSM 15497 / L2-TR) protein is Crossover junction endodeoxyribonuclease RuvC.